A 526-amino-acid polypeptide reads, in one-letter code: Probable feruloyl esterase B-2 (526 aa).

A signal peptide spans 1–18 (MTKLSLLPLLALASAVLA). Cystine bridges form between C27-C74 and C62-C113. N-linked (GlcNAc...) asparagine glycans are attached at residues N52, N97, and N137. Disulfide bonds link C186–C441, C255–C272, C281–C291, and C503–C525. Residue S187 is the Acyl-ester intermediate of the active site. N233 is a glycosylation site (N-linked (GlcNAc...) asparagine). 5 residues coordinate Ca(2+): D256, D259, A261, D263, and I265. N311 carries N-linked (GlcNAc...) asparagine glycosylation. Residues D400 and H440 each act as charge relay system in the active site. Residue N516 is glycosylated (N-linked (GlcNAc...) asparagine).

Belongs to the tannase family.

The protein localises to the secreted. The catalysed reaction is feruloyl-polysaccharide + H2O = ferulate + polysaccharide.. In terms of biological role, involved in degradation of plant cell walls. Hydrolyzes the feruloyl-arabinose ester bond in arabinoxylans as well as the feruloyl-galactose and feruloyl-arabinose ester bonds in pectin. This Neosartorya fischeri (strain ATCC 1020 / DSM 3700 / CBS 544.65 / FGSC A1164 / JCM 1740 / NRRL 181 / WB 181) (Aspergillus fischerianus) protein is Probable feruloyl esterase B-2 (faeB-2).